The following is a 248-amino-acid chain: Probable transcriptional regulatory protein FTL_0929 (248 aa).

It belongs to the TACO1 family.

Its subcellular location is the cytoplasm. The chain is Probable transcriptional regulatory protein FTL_0929 from Francisella tularensis subsp. holarctica (strain LVS).